We begin with the raw amino-acid sequence, 661 residues long: Coagulation factor XIII B chain (661 aa).

A signal peptide spans 1-20 (MRLKNLTFIIILIISGELYA). Sushi domains lie at 24–88 (PCGF…PRCF), 89–148 (KKCT…TCRK), 151–210 (ETCL…KCTK), 211–269 (LKCS…VCEG), 272–329 (NRCP…KCIE), 334–391 (VACE…ECVE), 394–452 (ENCK…VCLE), 453–516 (PCTV…PLCT), 522–580 (GMCT…LCLE), and 581–647 (PCTL…PRCI). 20 cysteine pairs are disulfide-bonded: Cys25-Cys76, Cys59-Cys87, Cys91-Cys135, Cys118-Cys146, Cys153-Cys197, Cys180-Cys208, Cys213-Cys255, Cys241-Cys267, Cys274-Cys316, Cys302-Cys327, Cys336-Cys378, Cys364-Cys389, Cys396-Cys439, Cys425-Cys450, Cys454-Cys505, Cys486-Cys515, Cys524-Cys567, Cys553-Cys578, Cys582-Cys636, and Cys616-Cys646. The N-linked (GlcNAc...) asparagine glycan is linked to Asn162. Asn545 carries N-linked (GlcNAc...) asparagine glycosylation. Residues 617–619 (RGD) carry the Cell attachment site motif.

Tetramer of two A chains (F13A1) and two B (F13B) chains.

Its subcellular location is the secreted. In terms of biological role, the B chain of factor XIII is not catalytically active, but is thought to stabilize the A subunits and regulate the rate of transglutaminase formation by thrombin. The sequence is that of Coagulation factor XIII B chain (F13B) from Homo sapiens (Human).